We begin with the raw amino-acid sequence, 261 residues long: Carbonic anhydrase 1 (261 aa).

Position 2 is an N-acetylalanine (A2). Residues 4–261 form the Alpha-carbonic anhydrase domain; it reads ADWGYGSENG…LKGRTVRASF (258 aa). H65 acts as the Proton donor/acceptor in catalysis. Positions 95, 97, and 120 each coordinate Zn(2+). Substrate-binding positions include T200 and 200-201; that span reads TH. The interval 239 to 261 is disordered; that stretch reads AVPVLSNHRPPQPLKGRTVRASF.

Belongs to the alpha-carbonic anhydrase family. Zn(2+) is required as a cofactor.

It is found in the cytoplasm. The enzyme catalyses hydrogencarbonate + H(+) = CO2 + H2O. It catalyses the reaction urea = cyanamide + H2O. With respect to regulation, inhibited by acetazolamide. Its function is as follows. Catalyzes the reversible hydration of carbon dioxide. Can hydrate cyanamide to urea. This Mus musculus (Mouse) protein is Carbonic anhydrase 1 (Ca1).